A 319-amino-acid chain; its full sequence is Ferrochelatase (319 aa).

Residues histidine 193 and glutamate 274 each contribute to the Fe cation site.

The protein belongs to the ferrochelatase family.

Its subcellular location is the cytoplasm. The enzyme catalyses heme b + 2 H(+) = protoporphyrin IX + Fe(2+). Its pathway is porphyrin-containing compound metabolism; protoheme biosynthesis; protoheme from protoporphyrin-IX: step 1/1. Catalyzes the ferrous insertion into protoporphyrin IX. The sequence is that of Ferrochelatase from Erwinia tasmaniensis (strain DSM 17950 / CFBP 7177 / CIP 109463 / NCPPB 4357 / Et1/99).